Reading from the N-terminus, the 637-residue chain is Proton myo-inositol cotransporter (637 aa).

The Cytoplasmic segment spans residues 1 to 65; the sequence is MSRKASEDVE…AARRQFQRDE (65 aa). Serine 6 is subject to Phosphoserine. Residues 16 to 38 form a disordered region; it reads LSSLMGERRRRQPEPGAPGGERS. Phosphoserine is present on residues serine 44 and serine 47. A helical transmembrane segment spans residues 66-86; that stretch reads TPAFVYAAAAFSALGGFLFGY. The Extracellular segment spans residues 87 to 114; that stretch reads DTGVVSGAMLLLRRQMRLGAMWQELLVS. The helical transmembrane segment at 115 to 135 threads the bilayer; sequence GAVGAAAVAALAGGALNGALG. Residues 136 to 137 are Cytoplasmic-facing; sequence RR. The chain crosses the membrane as a helical span at residues 138 to 158; that stretch reads SAILLASALCTVGSAVLAAAA. Over 159–167 the chain is Extracellular; the sequence is NKETLLAGR. A helical transmembrane segment spans residues 168 to 188; it reads LVVGLGIGIASMTVPVYIAEV. The Cytoplasmic portion of the chain corresponds to 189 to 201; that stretch reads SPPNLRGRLVTIN. Residues 202–222 form a helical membrane-spanning segment; it reads TLFITGGQFFASVVDGAFSYL. The Extracellular portion of the chain corresponds to 223–228; sequence QKDGWR. The helical transmembrane segment at 229-249 threads the bilayer; the sequence is YMLGLAAIPAVIQFLGFLFLP. At 250 to 313 the chain is on the cytoplasmic side; sequence ESPRWLIQKG…RMLSYPPTRR (64 aa). Residues 314–334 form a helical membrane-spanning segment; that stretch reads ALAVGCGLQMFQQLSGINTIM. Residues 335–352 are Extracellular-facing; that stretch reads YYSATILQMSGVEDDRLA. The chain crosses the membrane as a helical span at residues 353 to 373; the sequence is IWLASITAFTNFIFTLVGVWL. Residues 374 to 382 lie on the Cytoplasmic side of the membrane; it reads VEKVGRRKL. A helical membrane pass occupies residues 383-403; the sequence is TFGSLAGTTVALTILALGFLL. Residues 404–497 lie on the Extracellular side of the membrane; it reads SAQVSPRVTF…SFCPTPYSWT (94 aa). Asparagine 422, asparagine 447, and asparagine 474 each carry an N-linked (GlcNAc...) asparagine glycan. The helical transmembrane segment at 498–518 threads the bilayer; the sequence is ALVGLVLYLVFFAPGMGPMPW. Residues 519 to 538 lie on the Cytoplasmic side of the membrane; that stretch reads TVNSEIYPLWARSTGNACSA. Residues 539 to 559 form a helical membrane-spanning segment; the sequence is GINWIFNVLVSLTFLHTAEYL. The Extracellular segment spans residues 560–562; it reads TYY. Residues 563-583 form a helical membrane-spanning segment; sequence GAFFLYAGFAAVGLLFVYGCL. Residues 584-637 lie on the Cytoplasmic side of the membrane; that stretch reads PETKGKKLEEIESLFDHRLCTCGTADSDEGRYIEYIRVKGSNYHLSDNDASDVE. A phosphoserine mark is found at serine 629 and serine 634.

The protein belongs to the major facilitator superfamily. Sugar transporter (TC 2.A.1.1) family.

The protein resides in the cell membrane. It catalyses the reaction myo-inositol(out) + H(+)(out) = myo-inositol(in) + H(+)(in). H(+)-myo-inositol cotransporter. Can also transport related stereoisomers. The chain is Proton myo-inositol cotransporter from Rattus norvegicus (Rat).